A 387-amino-acid polypeptide reads, in one-letter code: EARP-interacting protein homolog (387 aa).

4 WD repeats span residues 132–172, 182–222, 226–266, and 270–310; these read TAHG…TKSV, KGQL…QIYC, AHGQ…EPVK, and EHSH…SEPF. The segment at 311 to 339 is disordered; the sequence is GHLVDDEDLSDQEDNPQEEKTKEPLQDSI. Over residues 315–326 the composition is skewed to acidic residues; that stretch reads DDEDLSDQEDNP. Residues 345-385 form a WD 5 repeat; the sequence is EHEDSVYAVEWSSADPWLFASLSYDGRLVINRVPRALKYNI.

This sequence belongs to the WD repeat EIPR1 family.

The protein localises to the golgi apparatus. It is found in the trans-Golgi network. Its function is as follows. May act as a component of endosomal retrieval machinery that is involved in protein transport from early endosomes to either recycling endosomes or the trans-Golgi network. In Xenopus laevis (African clawed frog), this protein is EARP-interacting protein homolog.